Consider the following 300-residue polypeptide: Protein YIF1B (300 aa).

A disordered region spans residues 1 to 46; sequence MNQESSFRAPPKRRVRGPNPNISTPHQLFDDTSGGPVPHGGEYPNH. At 1 to 142 the chain is on the cytoplasmic side; that stretch reads MNQESSFRAP…APRFDINAPD (142 aa). Residues 143-163 form a helical membrane-spanning segment; it reads LYIPVMAFITYILVAGLALGT. The Extracellular portion of the chain corresponds to 164 to 178; it reads QSRFSPEILGMQASS. Residues 179–199 traverse the membrane as a helical segment; sequence ALAWLIVEVLAILLSLYLVTV. Topologically, residues 200 to 205 are cytoplasmic; the sequence is NTDLTT. A helical membrane pass occupies residues 206–226; that stretch reads VDLVAFSGYKYVGMISGVISG. Residue L227 is a topological domain, extracellular. The helical transmembrane segment at 228 to 248 threads the bilayer; it reads LFGKTGYYVVLSWCGISVVFF. Topologically, residues 249-278 are cytoplasmic; sequence MIRTLRLKILSEAAAEGVLVRGARNQLRMY. Residues 279-299 traverse the membrane as a helical segment; the sequence is LTMAIAAVQPIFMYWLTYHLV. Position 300 (R300) is a topological domain, extracellular.

It belongs to the YIF1 family.

It localises to the endoplasmic reticulum membrane. It is found in the golgi apparatus membrane. Its subcellular location is the endoplasmic reticulum-Golgi intermediate compartment membrane. Functions in endoplasmic reticulum to Golgi vesicle-mediated transport and regulates the proper organization of the endoplasmic reticulum and the Golgi. Plays a key role in targeting to neuronal dendrites receptors such as HTR1A. Plays also a role in primary cilium and sperm flagellum assembly probably through protein transport to these compartments. This Xenopus tropicalis (Western clawed frog) protein is Protein YIF1B (yif1b).